Here is a 273-residue protein sequence, read N- to C-terminus: Flagellin FljN (273 aa).

The protein belongs to the bacterial flagellin family. In terms of assembly, in C.crescentus, the flagellar filament is composed of multiple flagellins of 29 kDa; 27 kDa and 25 kDa.

It is found in the secreted. The protein resides in the bacterial flagellum. Functionally, flagellin is the subunit protein which polymerizes to form the filaments of bacterial flagella. This Caulobacter vibrioides (strain ATCC 19089 / CIP 103742 / CB 15) (Caulobacter crescentus) protein is Flagellin FljN (fljN).